The primary structure comprises 600 residues: MKNQKYIRNFSIIAHIDHGKSTLADRLIEHCGGLQAREMRTQVLDSMDIEKERGITIKAQTVRLVYKAKDGNTYYLNLMDTPGHVDFAYEVSRSLAACEGSLLVVDSTQGVEAQTLANVYQAIEHDHEIVPVLNKIDLPASEPEQVKQQIEDIIGIDASEAVLISAKSGIGIDLVLEAIVNKLHPPKESSTDILKALLVDSWYDPYLGVVILVRIIDGTLRKNMRIKMMATNSVYTVENVGFFTPKKHISDVLYAGEIGFVTASIKQVADCKVGDTITDEKKPCEQALPGFKPNLPVVFCGLYPTDSSEFEHLKDSLAKLRLNDASFEYEMESSSALGVGFRCGFLGLLHLEIIQERLSREFDLDLITTAPSVVYKIHMRYGESLEIHNPADLPDLQKIESMEEPWIKATIMVPDEFLGAVLSLCTEKRGVQLDHSYIANRAKIVYKLPLNEIVYDFYDRLKSCSKGYASFEWQIDVYEPSELVKLGILVNGEVIDALSTIVHRSRAEQRGKVLCVRLKDLIPRQQIDIAIQASIGSRIIARETIKALRKDVLSKCYGGDISRKRKLLEKQKAGKKRMRQYGNIEIPQSAFIAALKIGDE.

Residues 5–187 form the tr-type G domain; that stretch reads KYIRNFSIIA…AIVNKLHPPK (183 aa). GTP contacts are provided by residues 17 to 22 and 134 to 137; these read DHGKST and NKID.

This sequence belongs to the TRAFAC class translation factor GTPase superfamily. Classic translation factor GTPase family. LepA subfamily.

Its subcellular location is the cell inner membrane. It catalyses the reaction GTP + H2O = GDP + phosphate + H(+). Functionally, required for accurate and efficient protein synthesis under certain stress conditions. May act as a fidelity factor of the translation reaction, by catalyzing a one-codon backward translocation of tRNAs on improperly translocated ribosomes. Back-translocation proceeds from a post-translocation (POST) complex to a pre-translocation (PRE) complex, thus giving elongation factor G a second chance to translocate the tRNAs correctly. Binds to ribosomes in a GTP-dependent manner. This Rickettsia akari (strain Hartford) protein is Elongation factor 4.